We begin with the raw amino-acid sequence, 367 residues long: Chorismate synthase (367 aa).

Positions 48 and 54 each coordinate NADP(+). Residues 125–127, 238–239, Gly-278, 293–297, and Arg-319 contribute to the FMN site; these read RSS, NA, and KPTSS.

Belongs to the chorismate synthase family. As to quaternary structure, homotetramer. FMNH2 is required as a cofactor.

The enzyme catalyses 5-O-(1-carboxyvinyl)-3-phosphoshikimate = chorismate + phosphate. It participates in metabolic intermediate biosynthesis; chorismate biosynthesis; chorismate from D-erythrose 4-phosphate and phosphoenolpyruvate: step 7/7. Its function is as follows. Catalyzes the anti-1,4-elimination of the C-3 phosphate and the C-6 proR hydrogen from 5-enolpyruvylshikimate-3-phosphate (EPSP) to yield chorismate, which is the branch point compound that serves as the starting substrate for the three terminal pathways of aromatic amino acid biosynthesis. This reaction introduces a second double bond into the aromatic ring system. This is Chorismate synthase from Xanthomonas campestris pv. campestris (strain B100).